A 159-amino-acid chain; its full sequence is Heavy metal-associated isoprenylated plant protein 28 (159 aa).

In terms of domain architecture, HMA spans Leu10–Glu73. Positions 21 and 24 each coordinate a metal cation. Cys156 is modified (cysteine methyl ester). Residue Cys156 is the site of S-farnesyl cysteine attachment. A propeptide spans Ser157 to Met159 (removed in mature form).

The protein belongs to the HIPP family.

Functionally, heavy-metal-binding protein. The sequence is that of Heavy metal-associated isoprenylated plant protein 28 from Arabidopsis thaliana (Mouse-ear cress).